The chain runs to 167 residues: UPF0225 protein VP1145 (167 aa).

It belongs to the UPF0225 family.

The sequence is that of UPF0225 protein VP1145 from Vibrio parahaemolyticus serotype O3:K6 (strain RIMD 2210633).